The following is a 66-amino-acid chain: Kappa-flavitoxin (66 aa).

Intrachain disulfides connect cysteine 3/cysteine 21, cysteine 14/cysteine 42, cysteine 27/cysteine 31, cysteine 46/cysteine 58, and cysteine 59/cysteine 64.

It belongs to the three-finger toxin family. Long-chain subfamily. Kappa-neurotoxin sub-subfamily. In terms of assembly, homo- and heterodimer; non-covalently linked. In terms of tissue distribution, expressed by the venom gland.

It localises to the secreted. Postsynaptic neurotoxin that binds and inhibits neuronal nicotinic acetylcholine receptors (nAChR) with high affinity (IC(50)&lt;100 nM). Is a selective, and slowly reversible antagonist of alpha-3/CHRNA3-containing and some alpha-4/CHRNA4-containing AChRs. The sequence is that of Kappa-flavitoxin from Bungarus flaviceps flaviceps (Red-headed krait).